We begin with the raw amino-acid sequence, 378 residues long: Spermidine/putrescine import ATP-binding protein PotA (378 aa).

The ABC transporter domain occupies 18–248; the sequence is VLLSGISKSF…PKNLFVAGFI (231 aa). 50–57 contacts ATP; that stretch reads GPSGCGKT.

It belongs to the ABC transporter superfamily. Spermidine/putrescine importer (TC 3.A.1.11.1) family. The complex is composed of two ATP-binding proteins (PotA), two transmembrane proteins (PotB and PotC) and a solute-binding protein (PotD).

It localises to the cell inner membrane. The enzyme catalyses ATP + H2O + polyamine-[polyamine-binding protein]Side 1 = ADP + phosphate + polyamineSide 2 + [polyamine-binding protein]Side 1.. In terms of biological role, part of the ABC transporter complex PotABCD involved in spermidine/putrescine import. Responsible for energy coupling to the transport system. This chain is Spermidine/putrescine import ATP-binding protein PotA, found in Salmonella choleraesuis (strain SC-B67).